The primary structure comprises 627 residues: Altered inheritance of mitochondria protein 9, mitochondrial (627 aa).

Residues 1 to 43 constitute a mitochondrion transit peptide; it reads MIRYTVAGHSRRCVVGASKRVGAIKCITVAATKRFISNKPNEV.

Belongs to the AIM9 family.

It is found in the mitochondrion. This chain is Altered inheritance of mitochondria protein 9, mitochondrial (AIM9), found in Saccharomyces cerevisiae (strain ATCC 204508 / S288c) (Baker's yeast).